Consider the following 69-residue polypeptide: Conotoxin Eb6.9 (69 aa).

An N-terminal signal peptide occupies residues V1–A17. Residues E18–R41 constitute a propeptide that is removed on maturation. Disulfide bonds link C43/C57, C50/C61, and C56/C68.

The protein belongs to the conotoxin O1 superfamily. As to expression, expressed by the venom duct.

It is found in the secreted. This is Conotoxin Eb6.9 (E1) from Conus ebraeus (Hebrew cone).